The sequence spans 239 residues: 2,3,4,5-tetrahydropyridine-2,6-dicarboxylate N-acetyltransferase (239 aa).

Belongs to the transferase hexapeptide repeat family. DapH subfamily.

It carries out the reaction (S)-2,3,4,5-tetrahydrodipicolinate + acetyl-CoA + H2O = L-2-acetamido-6-oxoheptanedioate + CoA. Its pathway is amino-acid biosynthesis; L-lysine biosynthesis via DAP pathway; LL-2,6-diaminopimelate from (S)-tetrahydrodipicolinate (acetylase route): step 1/3. In terms of biological role, catalyzes the transfer of an acetyl group from acetyl-CoA to tetrahydrodipicolinate. This chain is 2,3,4,5-tetrahydropyridine-2,6-dicarboxylate N-acetyltransferase, found in Staphylococcus aureus (strain JH9).